A 330-amino-acid polypeptide reads, in one-letter code: G-protein coupled receptor 3 (330 aa).

Residues 1–42 (MMWGAGSPLAWLSAGSGNVNVSSVGPAEGPTGPAAPLPSPKA) lie on the Extracellular side of the membrane. Asparagine 20 is a glycosylation site (N-linked (GlcNAc...) asparagine). A helical transmembrane segment spans residues 43-62 (WDVVLCISGTLVSCENALVV). At 63 to 74 (AIIVGTPAFRAP) the chain is on the cytoplasmic side. A helical transmembrane segment spans residues 75 to 98 (MFLLVGSLAVADLLAGLGLVLHFA). Topologically, residues 99 to 110 (AVFCIGSAEMSL) are extracellular. A helical membrane pass occupies residues 111 to 132 (VLVGVLAMAFTASIGSLLAITV). Over 133–153 (DRYLSLYNALTYYSETTVTRT) the chain is Cytoplasmic. The chain crosses the membrane as a helical span at residues 154–173 (YVMLALVWGGALGLGLLPVL). The Extracellular portion of the chain corresponds to 174-198 (AWNCLDGLTTCGVVYPLSKNHLVVL). A helical membrane pass occupies residues 199 to 217 (AIAFFMVFGIMLQLYAQIC). The Cytoplasmic portion of the chain corresponds to 218–245 (RIVCRHAQQIALQRHLLPASHYVATRKG). A helical transmembrane segment spans residues 246-272 (IATLAVVLGAFAACWLPFTVYCLLGDA). Residues 273–277 (HSPPL) are Extracellular-facing. Residues 278–299 (YTYLTLLPATYNSMINPIIYAF) traverse the membrane as a helical segment. At 300–330 (RNQDVQKVLWAVCCCCSSSKIPFRSRSPSDV) the chain is on the cytoplasmic side. Cysteine 313 carries S-palmitoyl cysteine lipidation. 3 positions are modified to phosphoserine: serine 324, serine 326, and serine 328.

It belongs to the G-protein coupled receptor 1 family. In terms of tissue distribution, expressed predominantly in the central nervous system, and at low levels in the lung, kidney, testis, ovary and eye. Highly expressed in regions of the brain implicated in the Alzheimer disease.

It is found in the cell membrane. Its function is as follows. Constitutively active G-protein coupled receptor that maintains high 3'-5'-cyclic adenosine monophosphate (cAMP) levels that a plays a role in serveral processes including meiotic arrest in oocytes or neuronal development via activation of numerous intracellular signaling pathways. Acts as an essential activator of thermogenic adipocytes and drives thermogenesis via its intrinsic G(s)-coupling activity without the requirement of a ligand. Has a potential role in modulating a number of brain functions, including behavioral responses to stress, amyloid-beta peptide generation in neurons. Stimulates neurite outgrowth in cerebellar granular neurons modulated via PKA, ERK, and most strongly PI3K-mediated signaling pathways. In Homo sapiens (Human), this protein is G-protein coupled receptor 3 (GPR3).